A 394-amino-acid polypeptide reads, in one-letter code: Cell division protein FtsZ (394 aa).

GTP-binding positions include Gly-21–Asn-25, Gly-108–Gly-110, Glu-139, Arg-143, and Asp-187.

Belongs to the FtsZ family. In terms of assembly, homodimer. Polymerizes to form a dynamic ring structure in a strictly GTP-dependent manner. Interacts directly with several other division proteins.

The protein localises to the cytoplasm. Functionally, essential cell division protein that forms a contractile ring structure (Z ring) at the future cell division site. The regulation of the ring assembly controls the timing and the location of cell division. One of the functions of the FtsZ ring is to recruit other cell division proteins to the septum to produce a new cell wall between the dividing cells. Binds GTP and shows GTPase activity. This is Cell division protein FtsZ from Azotobacter vinelandii.